A 121-amino-acid chain; its full sequence is Ribonuclease CL2 (121 aa).

Positions 6 and 9 each coordinate substrate. The active-site Proton acceptor is His-11. Cystine bridges form between Cys-26–Cys-81, Cys-42–Cys-92, and Cys-60–Cys-107. Residues 43–47 and Arg-82 each bind substrate; that span reads KPSNT. His-114 serves as the catalytic Proton donor.

The protein belongs to the pancreatic ribonuclease family.

The protein resides in the secreted. Its function is as follows. Pyrimidine-specific nuclease with preference for C. This is Ribonuclease CL2 from Gallus gallus (Chicken).